A 117-amino-acid polypeptide reads, in one-letter code: NADH-ubiquinone oxidoreductase chain 3 (117 aa).

Transmembrane regions (helical) follow at residues 4-24 (IIFI…LASI), 60-80 (ITII…MIII), and 86-106 (IMIW…GLYH).

The protein belongs to the complex I subunit 3 family.

It localises to the mitochondrion membrane. The catalysed reaction is a ubiquinone + NADH + 5 H(+)(in) = a ubiquinol + NAD(+) + 4 H(+)(out). Its function is as follows. Core subunit of the mitochondrial membrane respiratory chain NADH dehydrogenase (Complex I) that is believed to belong to the minimal assembly required for catalysis. Complex I functions in the transfer of electrons from NADH to the respiratory chain. The immediate electron acceptor for the enzyme is believed to be ubiquinone. This chain is NADH-ubiquinone oxidoreductase chain 3 (mt:ND3), found in Drosophila melanogaster (Fruit fly).